The primary structure comprises 270 residues: Tryptophan synthase alpha chain (270 aa).

Active-site proton acceptor residues include Glu-49 and Asp-60.

This sequence belongs to the TrpA family. In terms of assembly, tetramer of two alpha and two beta chains.

It catalyses the reaction (1S,2R)-1-C-(indol-3-yl)glycerol 3-phosphate + L-serine = D-glyceraldehyde 3-phosphate + L-tryptophan + H2O. Its pathway is amino-acid biosynthesis; L-tryptophan biosynthesis; L-tryptophan from chorismate: step 5/5. The alpha subunit is responsible for the aldol cleavage of indoleglycerol phosphate to indole and glyceraldehyde 3-phosphate. The sequence is that of Tryptophan synthase alpha chain from Thermobifida fusca (strain YX).